The primary structure comprises 839 residues: Dynein axonemal assembly factor 5 (839 aa).

HEAT repeat units lie at residues 10–48 (TSDV…DEKL), 54–92 (QHVF…HVPR), 94–137 (EEAL…VCGK), 140–178 (APYL…CIPE), 181–219 (HMQA…YSSG), 221–257 (SVDD…KLQD), 259–297 (YSFF…QWEK), 578–617 (GETL…KASE), 675–713 (LQVE…TCER), 717–755 (PDKL…CITD), and 723–761 (IYPE…ERTT).

It belongs to the DNAAF5 family. In terms of assembly, interacts with DNAI2; probably involved in outer arm dynein assembly.

The protein resides in the cytoplasm. It is found in the dynein axonemal particle. Its function is as follows. Cytoplasmic protein involved in the delivery of the dynein machinery to the motile cilium. It is required for the assembly of the axonemal dynein inner and outer arms, two structures attached to the peripheral outer doublet A microtubule of the axoneme, that play a crucial role in cilium motility. The polypeptide is Dynein axonemal assembly factor 5 (Xenopus laevis (African clawed frog)).